Consider the following 265-residue polypeptide: Phosphatidylglycerol--prolipoprotein diacylglyceryl transferase (265 aa).

Helical transmembrane passes span 17–37 (LAIRWYGLMYLAAFAQFIWLA), 59–79 (MLFYGVLGVIIGGRLGEVLFY), 94–114 (VWKGGMSFHGGFLGVLLAMSI), 123–143 (VLDVWDFIAPMVPLGYAFGRL), 177–197 (SPLYQALVDGLLMFILLWLFA), 204–224 (MAVGGMFALLYGSARFFTEYF), and 238–258 (ISAGQMLSVPLIVLGIVMLLI). Residue Arg-142 coordinates a 1,2-diacyl-sn-glycero-3-phospho-(1'-sn-glycerol).

The protein belongs to the Lgt family.

It localises to the cell inner membrane. It carries out the reaction L-cysteinyl-[prolipoprotein] + a 1,2-diacyl-sn-glycero-3-phospho-(1'-sn-glycerol) = an S-1,2-diacyl-sn-glyceryl-L-cysteinyl-[prolipoprotein] + sn-glycerol 1-phosphate + H(+). It participates in protein modification; lipoprotein biosynthesis (diacylglyceryl transfer). Catalyzes the transfer of the diacylglyceryl group from phosphatidylglycerol to the sulfhydryl group of the N-terminal cysteine of a prolipoprotein, the first step in the formation of mature lipoproteins. This Janthinobacterium sp. (strain Marseille) (Minibacterium massiliensis) protein is Phosphatidylglycerol--prolipoprotein diacylglyceryl transferase.